A 702-amino-acid chain; its full sequence is ATP-dependent zinc metalloprotease FtsH (702 aa).

At 1-26 (MKKRNKGLVEQTTTEKNNFSRKTAWK) the chain is on the cytoplasmic side. A helical transmembrane segment spans residues 27-47 (VFWWVIILAVVIGVLAYIFSP). Over 48-175 (RAATAVVESW…FIAPDTRARD (128 aa)) the chain is Extracellular. A helical transmembrane segment spans residues 176 to 196 (VLNGLFGLLPIIIFVVFFLLF). Residues 197 to 702 (WRSARGISAG…EVKPESETNS (506 aa)) are Cytoplasmic-facing. 271–278 (GPPGTGKT) is a binding site for ATP. H493 provides a ligand contact to Zn(2+). E494 is a catalytic residue. Positions 497 and 572 each coordinate Zn(2+). The segment at 682-702 (EQQAKQKLNKSEVKPESETNS) is disordered. A compositionally biased stretch (basic and acidic residues) spans 690–702 (NKSEVKPESETNS).

The protein in the central section; belongs to the AAA ATPase family. This sequence in the C-terminal section; belongs to the peptidase M41 family. In terms of assembly, homohexamer. The cofactor is Zn(2+).

The protein localises to the cell membrane. In terms of biological role, acts as a processive, ATP-dependent zinc metallopeptidase for both cytoplasmic and membrane proteins. Plays a role in the quality control of integral membrane proteins. The chain is ATP-dependent zinc metalloprotease FtsH from Mycoplasma genitalium (strain ATCC 33530 / DSM 19775 / NCTC 10195 / G37) (Mycoplasmoides genitalium).